The primary structure comprises 466 residues: GTP cyclohydrolase 1 (466 aa).

Residues cysteine 342, histidine 345, and cysteine 416 each contribute to the Zn(2+) site.

The protein belongs to the GTP cyclohydrolase I family. In terms of assembly, homodimer.

It carries out the reaction GTP + H2O = 7,8-dihydroneopterin 3'-triphosphate + formate + H(+). It functions in the pathway cofactor biosynthesis; 7,8-dihydroneopterin triphosphate biosynthesis; 7,8-dihydroneopterin triphosphate from GTP: step 1/1. Its function is as follows. GTP cyclohydrolase 1 is the first enzyme in the biosynthetic pathway leading to folic acid. The sequence is that of GTP cyclohydrolase 1 (GCH1) from Arabidopsis thaliana (Mouse-ear cress).